A 496-amino-acid polypeptide reads, in one-letter code: Cytochrome P450 71D181 (496 aa).

A helical; Signal-anchor for type II membrane protein transmembrane segment spans residues 1-21 (MDISILWVAIILVISSYFIFM). Residue Cys435 coordinates heme. The segment at 471–496 (MSETPGLSGPRKNPLIMVPTIHNPTS) is disordered.

This sequence belongs to the cytochrome P450 family. Requires heme as cofactor.

The protein localises to the membrane. The catalysed reaction is gamma-terpinene + 2 reduced [NADPH--hemoprotein reductase] + 2 O2 = carvacrol + 2 oxidized [NADPH--hemoprotein reductase] + 3 H2O + 2 H(+). The enzyme catalyses (4S)-limonene + reduced [NADPH--hemoprotein reductase] + O2 = (1S,5R)-carveol + oxidized [NADPH--hemoprotein reductase] + H2O + H(+). It carries out the reaction (4R)-limonene + reduced [NADPH--hemoprotein reductase] + O2 = (1R,5S)-carveol + oxidized [NADPH--hemoprotein reductase] + H2O + H(+). It catalyses the reaction alpha-terpinene + 2 reduced [NADPH--hemoprotein reductase] + 2 O2 = carvacrol + 2 oxidized [NADPH--hemoprotein reductase] + 3 H2O + 2 H(+). The protein operates within secondary metabolite biosynthesis; terpenoid biosynthesis. Functionally, involved in the biosynthesis of phenolic monoterpenes natural products thymol and carvacrol which have a broad range of biological activities acting as antimicrobial compounds, insecticides, antioxidants and pharmaceutical agents. Catalyzes the C2-hydroxylation of gamma-terpinene and alpha-terpinene to produce carvacrol. Also mediates the C6-hydroxylation of (4S)-limonene and (4R)-limonene to form carveol. This Thymus vulgaris (Thyme) protein is Cytochrome P450 71D181.